Reading from the N-terminus, the 136-residue chain is Ribonuclease P protein component (136 aa).

Residues 39–59 are disordered; the sequence is LPDVSSSKPARDTGAEQTSAP.

This sequence belongs to the RnpA family. As to quaternary structure, consists of a catalytic RNA component (M1 or rnpB) and a protein subunit.

The catalysed reaction is Endonucleolytic cleavage of RNA, removing 5'-extranucleotides from tRNA precursor.. Functionally, RNaseP catalyzes the removal of the 5'-leader sequence from pre-tRNA to produce the mature 5'-terminus. It can also cleave other RNA substrates such as 4.5S RNA. The protein component plays an auxiliary but essential role in vivo by binding to the 5'-leader sequence and broadening the substrate specificity of the ribozyme. In Salinispora tropica (strain ATCC BAA-916 / DSM 44818 / JCM 13857 / NBRC 105044 / CNB-440), this protein is Ribonuclease P protein component.